A 128-amino-acid chain; its full sequence is Large ribosomal subunit protein bL12 (128 aa).

It belongs to the bacterial ribosomal protein bL12 family. In terms of assembly, homodimer. Part of the ribosomal stalk of the 50S ribosomal subunit. Forms a multimeric L10(L12)X complex, where L10 forms an elongated spine to which 2 to 4 L12 dimers bind in a sequential fashion. Binds GTP-bound translation factors.

Functionally, forms part of the ribosomal stalk which helps the ribosome interact with GTP-bound translation factors. Is thus essential for accurate translation. The protein is Large ribosomal subunit protein bL12 of Synechococcus sp. (strain CC9311).